The following is a 457-amino-acid chain: Siroheme synthase (457 aa).

The segment at 1-204 is precorrin-2 dehydrogenase /sirohydrochlorin ferrochelatase; sequence MDHLPIFCQL…NDQKAITETT (204 aa). NAD(+)-binding positions include 22–23 and 43–44; these read DV and LA. Serine 128 bears the Phosphoserine mark. The tract at residues 216–457 is uroporphyrinogen-III C-methyltransferase; the sequence is GEVVLVGAGP…RDKLNWFSNH (242 aa). Proline 225 lines the S-adenosyl-L-methionine pocket. Aspartate 248 (proton acceptor) is an active-site residue. Lysine 270 acts as the Proton donor in catalysis. Residues 301–303, isoleucine 306, 331–332, methionine 382, and glycine 411 contribute to the S-adenosyl-L-methionine site; these read GGD and TA.

In the N-terminal section; belongs to the precorrin-2 dehydrogenase / sirohydrochlorin ferrochelatase family. The protein in the C-terminal section; belongs to the precorrin methyltransferase family.

It carries out the reaction uroporphyrinogen III + 2 S-adenosyl-L-methionine = precorrin-2 + 2 S-adenosyl-L-homocysteine + H(+). The enzyme catalyses precorrin-2 + NAD(+) = sirohydrochlorin + NADH + 2 H(+). The catalysed reaction is siroheme + 2 H(+) = sirohydrochlorin + Fe(2+). It participates in cofactor biosynthesis; adenosylcobalamin biosynthesis; precorrin-2 from uroporphyrinogen III: step 1/1. It functions in the pathway cofactor biosynthesis; adenosylcobalamin biosynthesis; sirohydrochlorin from precorrin-2: step 1/1. Its pathway is porphyrin-containing compound metabolism; siroheme biosynthesis; precorrin-2 from uroporphyrinogen III: step 1/1. The protein operates within porphyrin-containing compound metabolism; siroheme biosynthesis; siroheme from sirohydrochlorin: step 1/1. It participates in porphyrin-containing compound metabolism; siroheme biosynthesis; sirohydrochlorin from precorrin-2: step 1/1. Multifunctional enzyme that catalyzes the SAM-dependent methylations of uroporphyrinogen III at position C-2 and C-7 to form precorrin-2 via precorrin-1. Then it catalyzes the NAD-dependent ring dehydrogenation of precorrin-2 to yield sirohydrochlorin. Finally, it catalyzes the ferrochelation of sirohydrochlorin to yield siroheme. This is Siroheme synthase from Shigella dysenteriae serotype 1 (strain Sd197).